The chain runs to 143 residues: Root meristem growth factor 10 (143 aa).

A signal peptide spans 1–27; sequence MDMLRSACFYFLLIVFVILSWSLLCDS. Positions 28–130 are excised as a propeptide; that stretch reads RHLGHMEKKL…SDQEHPGFNL (103 aa). Asn-60 is a glycosylation site (N-linked (GlcNAc...) asparagine). Residues 74–83 show a composition bias toward polar residues; the sequence is NHGDNGQING. Residues 74–143 are disordered; it reads NHGDNGQING…QPTTHPPHHN (70 aa). The Nuclear localization signal signature appears at 92-99; sequence VKRASDKK. Tyr-132 carries the post-translational modification Sulfotyrosine. Pro-140 is subject to Hydroxyproline.

It belongs to the RGF family. As to quaternary structure, binds to LRR receptor-like serine/threonine-protein kinases RGI1, RGI2 and RGI3 to trigger their dimerization with SERK proteins and subsequent signaling. In terms of processing, the tyrosine sulfation is critical for the function of the peptide. Expressed in root tips.

The protein localises to the secreted. The protein resides in the nucleus. Functionally, maintains the postembryonic root stem cell niche by regulating the expression levels and patterns of the transcription factor PLETHORA (PLT), mainly at the post-transcriptional level. Promotes root elongation. The sequence is that of Root meristem growth factor 10 from Arabidopsis thaliana (Mouse-ear cress).